The following is a 1693-amino-acid chain: Putative stoned B-like protein (1693 aa).

The segment covering 1 to 12 (MSWRDRDFDPHG) has biased composition (basic and acidic residues). Disordered regions lie at residues 1-54 (MSWR…ELPA), 222-322 (NQIP…VEKS), 334-371 (TVEITSPDAPHQGAFHDNTPKEPKVVEEEEDDDLPTFS), 383-438 (KEMT…DPNA), 585-807 (GDYH…TSAA), 841-869 (KKMEKLQKKKLKQQGKKAATPTLEPDEED), and 899-1024 (PVKE…FVAD). The span at 26–39 (SSSERAASMRAMRS) shows a compositional bias: low complexity. Composition is skewed to basic and acidic residues over residues 279 to 301 (MEDKMEQAEEKARKEEKKEKEET) and 311 to 322 (TTEKHQNEVEKS). Residues 360–371 (EEEEDDDLPTFS) are compositionally biased toward acidic residues. Over residues 393 to 412 (ENVENEKQEDTHISEGHVEY) the composition is skewed to basic and acidic residues. Residues 596–615 (DENSTSAISGYEQNGASTSL) are compositionally biased toward polar residues. A compositionally biased stretch (low complexity) spans 632–643 (YYQGQEYQQEYY). A DPF 1 motif is present at residues 684–686 (DPF). Low complexity predominate over residues 708 to 722 (SPTPEASSSTGTSAP). The span at 745–760 (PPRPPPAARPPPPRPA) shows a compositional bias: pro residues. The segment covering 786–807 (KVSTAVKSTESTLKNLEETSAA) has biased composition (polar residues). Basic and acidic residues predominate over residues 899–913 (PVKEIKKAPEIRRVD). Short sequence motifs (DPF) lie at residues 1006–1008 (DPF), 1024–1026 (DPF), and 1039–1041 (DPF). The segment at 1062–1095 (ANAENEDDFYNGRQSPTLSTPTPEGGSPISQQRP) is disordered. A compositionally biased stretch (polar residues) spans 1073–1095 (GRQSPTLSTPTPEGGSPISQQRP). The region spanning 1136 to 1283 (GWDLMVRHPI…KCKITRTAKP (148 aa)) is the SHD domain. The MHD domain maps to 1287-1606 (QDEVQIHCYD…AKYQYKVEID (320 aa)). The segment at 1633 to 1693 (ELHQPTFNPS…IQIDMKNYGY (61 aa)) is disordered. Residues 1637–1651 (PTFNPSTQESDTQQG) are compositionally biased toward polar residues.

The protein belongs to the Stoned B family.

Its subcellular location is the cytoplasm. Its function is as follows. Potential adapter protein, which may be involved in endocytic vesicle recycling of synaptic vesicles. This chain is Putative stoned B-like protein (unc-41), found in Caenorhabditis elegans.